The sequence spans 323 residues: Olfactory receptor 2T35 (323 aa).

Residues 1–26 (MGMEGLLQNSTNFVLTGLITHPAFPG) lie on the Extracellular side of the membrane. N-linked (GlcNAc...) asparagine glycosylation occurs at asparagine 9. A helical membrane pass occupies residues 27 to 50 (LLFAVVFSIFVVAITANLVMILLI). Residues 51–58 (HMDSRLHT) are Cytoplasmic-facing. The chain crosses the membrane as a helical span at residues 59-80 (PMYFLLSQLSIMDTIYICITVP). Over 81 to 101 (KMLQDLLSKDKTISFLGCAVQ) the chain is Extracellular. Cysteine 98 and cysteine 189 form a disulfide bridge. Residues 102 to 120 (IFYLTLIGGEFFLLGLMAY) form a helical membrane-spanning segment. Topologically, residues 121–139 (DRYVAVCNPLRYPLLMNRR) are cytoplasmic. The helical transmembrane segment at 140 to 158 (VCLFMVVGSWVGGSLDGFM) threads the bilayer. The Extracellular portion of the chain corresponds to 159–195 (LTPVTMSFPFCRSREINHFFCEIPAVLKLSCTDTSLY). A helical membrane pass occupies residues 196–219 (ETLMYACCVLMLLIPLSVISVSYT). The Cytoplasmic portion of the chain corresponds to 220–236 (HILLTVHRMNSAEGRRK). A helical transmembrane segment spans residues 237–259 (AFATCSSHIMVVSVFYGAAFYTN). Topologically, residues 260–272 (VLPHSYHTPEKDK) are extracellular. Residues 273-292 (VVSAFYTILTPMLNPLIYSL) form a helical membrane-spanning segment. The Cytoplasmic portion of the chain corresponds to 293 to 323 (RNKDVAAALRKVLGRCGSSQSIRVATVIRKG).

Belongs to the G-protein coupled receptor 1 family.

It localises to the cell membrane. Odorant receptor. The sequence is that of Olfactory receptor 2T35 (OR2T35) from Homo sapiens (Human).